Here is a 316-residue protein sequence, read N- to C-terminus: Meiotically up-regulated gene 154 protein (316 aa).

4 helical membrane-spanning segments follow: residues Y41–K61, A88–S108, F159–S179, and L186–L206. Residues H291–F316 are disordered.

It localises to the endoplasmic reticulum membrane. In terms of biological role, has a role in meiosis. In Schizosaccharomyces pombe (strain 972 / ATCC 24843) (Fission yeast), this protein is Meiotically up-regulated gene 154 protein (mug154).